The chain runs to 707 residues: Ribosomal RNA large subunit methyltransferase K/L (707 aa).

Positions 44-155 (VIYNLCLWSR…NDILTVSFDL (112 aa)) constitute a THUMP domain.

The protein belongs to the methyltransferase superfamily. RlmKL family.

The protein localises to the cytoplasm. It catalyses the reaction guanosine(2445) in 23S rRNA + S-adenosyl-L-methionine = N(2)-methylguanosine(2445) in 23S rRNA + S-adenosyl-L-homocysteine + H(+). The catalysed reaction is guanosine(2069) in 23S rRNA + S-adenosyl-L-methionine = N(2)-methylguanosine(2069) in 23S rRNA + S-adenosyl-L-homocysteine + H(+). In terms of biological role, specifically methylates the guanine in position 2445 (m2G2445) and the guanine in position 2069 (m7G2069) of 23S rRNA. The chain is Ribosomal RNA large subunit methyltransferase K/L from Legionella pneumophila (strain Lens).